Here is a 568-residue protein sequence, read N- to C-terminus: Urease subunit alpha (568 aa).

The Urease domain maps to 130–568 (GGIDSHIHFI…LPMAQRYFLF (439 aa)). His135, His137, and Lys218 together coordinate Ni(2+). Residue Lys218 is modified to N6-carboxylysine. Position 220 (His220) interacts with substrate. Residues His247 and His273 each coordinate Ni(2+). The active-site Proton donor is His321. Asp361 provides a ligand contact to Ni(2+).

This sequence belongs to the metallo-dependent hydrolases superfamily. Urease alpha subunit family. As to quaternary structure, heterotrimer of UreA (gamma), UreB (beta) and UreC (alpha) subunits. Three heterotrimers associate to form the active enzyme. It depends on Ni cation as a cofactor. Post-translationally, carboxylation allows a single lysine to coordinate two nickel ions.

The protein localises to the cytoplasm. The catalysed reaction is urea + 2 H2O + H(+) = hydrogencarbonate + 2 NH4(+). It participates in nitrogen metabolism; urea degradation; CO(2) and NH(3) from urea (urease route): step 1/1. This Nitrosospira multiformis (strain ATCC 25196 / NCIMB 11849 / C 71) protein is Urease subunit alpha.